The primary structure comprises 118 residues: Holo-[acyl-carrier-protein] synthase (118 aa).

Residues D8 and E57 each coordinate Mg(2+).

It belongs to the P-Pant transferase superfamily. AcpS family. Mg(2+) serves as cofactor.

The protein localises to the cytoplasm. It catalyses the reaction apo-[ACP] + CoA = holo-[ACP] + adenosine 3',5'-bisphosphate + H(+). In terms of biological role, transfers the 4'-phosphopantetheine moiety from coenzyme A to a Ser of acyl-carrier-protein. The protein is Holo-[acyl-carrier-protein] synthase of Acholeplasma laidlawii (strain PG-8A).